The following is a 521-amino-acid chain: Probable protein kinase UbiB (521 aa).

A Protein kinase domain is found at serine 119–alanine 497. Residues valine 125–valine 133 and lysine 151 each bind ATP. Residue aspartate 286 is the Proton acceptor of the active site. The chain crosses the membrane as a helical span at residues glutamine 496 to valine 516.

Belongs to the ABC1 family. UbiB subfamily.

It localises to the cell inner membrane. It functions in the pathway cofactor biosynthesis; ubiquinone biosynthesis [regulation]. In terms of biological role, is probably a protein kinase regulator of UbiI activity which is involved in aerobic coenzyme Q (ubiquinone) biosynthesis. This Delftia acidovorans (strain DSM 14801 / SPH-1) protein is Probable protein kinase UbiB.